The sequence spans 556 residues: Oxygen-dependent choline dehydrogenase (556 aa).

Position 6 to 35 (6 to 35 (DYIIIGAGSAGNVLAARLTEDPGVTVLLLE)) interacts with FAD. The Proton acceptor role is filled by His-475.

This sequence belongs to the GMC oxidoreductase family. The cofactor is FAD.

The enzyme catalyses choline + A = betaine aldehyde + AH2. The catalysed reaction is betaine aldehyde + NAD(+) + H2O = glycine betaine + NADH + 2 H(+). The protein operates within amine and polyamine biosynthesis; betaine biosynthesis via choline pathway; betaine aldehyde from choline (cytochrome c reductase route): step 1/1. Functionally, involved in the biosynthesis of the osmoprotectant glycine betaine. Catalyzes the oxidation of choline to betaine aldehyde and betaine aldehyde to glycine betaine at the same rate. This Xanthomonas euvesicatoria pv. vesicatoria (strain 85-10) (Xanthomonas campestris pv. vesicatoria) protein is Oxygen-dependent choline dehydrogenase.